The sequence spans 473 residues: PTS system trehalose-specific EIIBC component (473 aa).

In terms of domain architecture, PTS EIIB type-1 spans methionine 1–aspartate 89. Residues methionine 1–histidine 110 lie on the Cytoplasmic side of the membrane. The active-site Phosphocysteine intermediate; for EIIB activity is cysteine 29. Cysteine 29 carries the phosphocysteine; by EIIA modification. Residues serine 109–valine 473 enclose the PTS EIIC type-1 domain. Residues phenylalanine 111 to phenylalanine 131 traverse the membrane as a helical segment. Topologically, residues arginine 132–aspartate 158 are periplasmic. Residues phenylalanine 159–alanine 179 form a helical membrane-spanning segment. The Cytoplasmic segment spans residues valine 180–proline 187. The chain crosses the membrane as a helical span at residues isoleucine 188–leucine 208. Topologically, residues glycine 209–lysine 225 are periplasmic. Residues valine 226–glutamate 246 form a helical membrane-spanning segment. Over threonine 247–tyrosine 258 the chain is Cytoplasmic. A helical membrane pass occupies residues leucine 259 to glycine 279. Residues proline 280 to serine 300 lie on the Periplasmic side of the membrane. A helical membrane pass occupies residues phenylalanine 301–valine 321. The Cytoplasmic portion of the chain corresponds to histidine 322 to proline 340. A helical transmembrane segment spans residues valine 341 to isoleucine 361. The Periplasmic portion of the chain corresponds to serine 362 to glutamate 370. Residues isoleucine 371–isoleucine 391 form a helical membrane-spanning segment. The Cytoplasmic portion of the chain corresponds to asparagine 392–proline 398. Residues methionine 399–methionine 419 form a helical membrane-spanning segment. Over alanine 420–glutamine 440 the chain is Periplasmic. The helical transmembrane segment at valine 441 to tyrosine 461 threads the bilayer. Residues glutamine 462 to valine 473 lie on the Cytoplasmic side of the membrane.

It localises to the cell inner membrane. The enzyme catalyses alpha,alpha-trehalose(out) + N(pros)-phospho-L-histidyl-[protein] = alpha,alpha-trehalose 6-phosphate(in) + L-histidyl-[protein]. Its function is as follows. The phosphoenolpyruvate-dependent sugar phosphotransferase system (sugar PTS), a major carbohydrate active transport system, catalyzes the phosphorylation of incoming sugar substrates concomitantly with their translocation across the cell membrane. This system is involved in trehalose transport at low osmolarity. The chain is PTS system trehalose-specific EIIBC component (treB) from Escherichia coli (strain K12).